Consider the following 354-residue polypeptide: Uroporphyrinogen decarboxylase (354 aa).

Substrate contacts are provided by residues Arg27–Arg31, Phe46, Asp77, Tyr154, Ser209, and His327.

This sequence belongs to the uroporphyrinogen decarboxylase family. In terms of assembly, homodimer.

The protein localises to the cytoplasm. The enzyme catalyses uroporphyrinogen III + 4 H(+) = coproporphyrinogen III + 4 CO2. Its pathway is porphyrin-containing compound metabolism; protoporphyrin-IX biosynthesis; coproporphyrinogen-III from 5-aminolevulinate: step 4/4. In terms of biological role, catalyzes the decarboxylation of four acetate groups of uroporphyrinogen-III to yield coproporphyrinogen-III. In Shewanella oneidensis (strain ATCC 700550 / JCM 31522 / CIP 106686 / LMG 19005 / NCIMB 14063 / MR-1), this protein is Uroporphyrinogen decarboxylase.